Here is a 245-residue protein sequence, read N- to C-terminus: tRNA1(Val) (adenine(37)-N6)-methyltransferase (245 aa).

This sequence belongs to the methyltransferase superfamily. tRNA (adenine-N(6)-)-methyltransferase family.

The protein localises to the cytoplasm. It catalyses the reaction adenosine(37) in tRNA1(Val) + S-adenosyl-L-methionine = N(6)-methyladenosine(37) in tRNA1(Val) + S-adenosyl-L-homocysteine + H(+). Its function is as follows. Specifically methylates the adenine in position 37 of tRNA(1)(Val) (anticodon cmo5UAC). The sequence is that of tRNA1(Val) (adenine(37)-N6)-methyltransferase from Shigella dysenteriae serotype 1 (strain Sd197).